The following is a 315-amino-acid chain: Gamma-hemolysin component C (315 aa).

Positions 1–29 are cleaved as a signal peptide; that stretch reads MLKNKILATTLSVSLLAPLANPLLENAKA.

Belongs to the aerolysin family. As to quaternary structure, toxicity requires sequential binding and synergistic association of a class S and a class F component which form heterooligomeric complexes. HlgC (class S) associates with HlgB (class F) thus forming an CB toxin.

In terms of biological role, toxin that seems to act by forming pores in the membrane of the cell. Has a hemolytic and a leucotoxic activity. This Staphylococcus aureus (strain MRSA252) protein is Gamma-hemolysin component C (hlgC).